Consider the following 635-residue polypeptide: Leucine-rich repeat and fibronectin type-III domain-containing protein 4 (635 aa).

Positions 1-16 (MAPPLLLLLLASGAAA) are cleaved as a signal peptide. The LRRNT domain occupies 17 to 48 (CPLPCVCQNLSESLSTLCAHRGLLFVPPNVDR). Over 17–518 (CPLPCVCQNL…LQAHVLGGTL (502 aa)) the chain is Extracellular. N-linked (GlcNAc...) asparagine glycans are attached at residues Asn25 and Asn70. LRR repeat units follow at residues 49–70 (RTVELRLADNFIQALGPPDFRN), 73–94 (GLVDLTLSRNAITRIGARAFGD), 97–118 (SLRSLHLDGNRLVELGTGSLRG), 121–142 (NLQHLILSGNQLGRIAPGAFDD), 146–161 (SLEDLDLSYNNLRQVP), 170–191 (ALHTLNLDHNLIDALPPGAFAQ), and 194–215 (QLSRLDLTSNRLATLAPDPLFS). Residues 234-280 (NPLHCNCELLWLRRLARPDDLETCASPPGLAGRYFWAVPEGEFSCEP) form the LRRCT domain. The Ig-like domain maps to 281-367 (PLIARHTQRL…GEATARVELR (87 aa)). Residues Cys302 and Cys351 are joined by a disulfide bond. N-linked (GlcNAc...) asparagine glycans are attached at residues Asn324, Asn333, Asn376, and Asn440. The disordered stretch occupies residues 373 to 410 (HGGNSSAEGGRPGPSDIAASARTAAEGEGTLESEPAVQ). One can recognise a Fibronectin type-III domain in the interval 405-502 (SEPAVQVTEV…GCAHFSTLPA (98 aa)). Residues 519–539 (TVAVGGVLVAALLVFTVALLV) traverse the membrane as a helical segment. At 540–635 (RGRGAGNGRL…SAERLEESVV (96 aa)) the chain is on the cytoplasmic side. The segment at 555 to 583 (HVQSQTNGGPSPTPKAHPPRSPPPRPQRS) is disordered. Positions 565–580 (SPTPKAHPPRSPPPRP) are enriched in pro residues. Ser585 and Ser626 each carry phosphoserine. Positions 632 to 635 (ESVV) match the PDZ-binding motif.

The protein belongs to the LRFN family. Can form heteromeric complexes with LRFN1, LRFN2, LRFN3 and LRFN5. Unable to form homophilic interactions across cell junctions. Interacts with DLG1, DLG2, DLG3 and DLG4. In terms of processing, glycosylated.

It is found in the membrane. Its function is as follows. Promotes neurite outgrowth in hippocampal neurons. May play a role in redistributing DLG4 to the cell periphery. The sequence is that of Leucine-rich repeat and fibronectin type-III domain-containing protein 4 (LRFN4) from Homo sapiens (Human).